The chain runs to 341 residues: UDP-3-O-acylglucosamine N-acyltransferase (341 aa).

The active-site Proton acceptor is His-237.

The protein belongs to the transferase hexapeptide repeat family. LpxD subfamily. Homotrimer.

It carries out the reaction a UDP-3-O-[(3R)-3-hydroxyacyl]-alpha-D-glucosamine + a (3R)-hydroxyacyl-[ACP] = a UDP-2-N,3-O-bis[(3R)-3-hydroxyacyl]-alpha-D-glucosamine + holo-[ACP] + H(+). It participates in bacterial outer membrane biogenesis; LPS lipid A biosynthesis. Its function is as follows. Catalyzes the N-acylation of UDP-3-O-acylglucosamine using 3-hydroxyacyl-ACP as the acyl donor. Is involved in the biosynthesis of lipid A, a phosphorylated glycolipid that anchors the lipopolysaccharide to the outer membrane of the cell. The protein is UDP-3-O-acylglucosamine N-acyltransferase of Azoarcus sp. (strain BH72).